A 474-amino-acid chain; its full sequence is Methylenetetrahydrofolate--tRNA-(uracil-5-)-methyltransferase TrmFO (474 aa).

13 to 18 provides a ligand contact to FAD; that stretch reads GGGLAG.

This sequence belongs to the MnmG family. TrmFO subfamily. The cofactor is FAD.

It localises to the cytoplasm. The enzyme catalyses uridine(54) in tRNA + (6R)-5,10-methylene-5,6,7,8-tetrahydrofolate + NADH + H(+) = 5-methyluridine(54) in tRNA + (6S)-5,6,7,8-tetrahydrofolate + NAD(+). It carries out the reaction uridine(54) in tRNA + (6R)-5,10-methylene-5,6,7,8-tetrahydrofolate + NADPH + H(+) = 5-methyluridine(54) in tRNA + (6S)-5,6,7,8-tetrahydrofolate + NADP(+). Catalyzes the folate-dependent formation of 5-methyl-uridine at position 54 (M-5-U54) in all tRNAs. This Bartonella tribocorum (strain CIP 105476 / IBS 506) protein is Methylenetetrahydrofolate--tRNA-(uracil-5-)-methyltransferase TrmFO.